The following is a 607-amino-acid chain: Elongation factor 4 (607 aa).

The region spanning 11 to 193 (EKIRNFSIIA…QIVEKVPAPT (183 aa)) is the tr-type G domain. Residues 23 to 28 (DHGKST) and 140 to 143 (NKID) each bind GTP.

It belongs to the TRAFAC class translation factor GTPase superfamily. Classic translation factor GTPase family. LepA subfamily.

The protein localises to the cell membrane. It carries out the reaction GTP + H2O = GDP + phosphate + H(+). In terms of biological role, required for accurate and efficient protein synthesis under certain stress conditions. May act as a fidelity factor of the translation reaction, by catalyzing a one-codon backward translocation of tRNAs on improperly translocated ribosomes. Back-translocation proceeds from a post-translocation (POST) complex to a pre-translocation (PRE) complex, thus giving elongation factor G a second chance to translocate the tRNAs correctly. Binds to ribosomes in a GTP-dependent manner. This Streptococcus pneumoniae serotype 19F (strain G54) protein is Elongation factor 4.